Consider the following 1755-residue polypeptide: E3 ubiquitin-protein ligase UBR2 (1755 aa).

A2 is subject to N-acetylalanine. K94 is covalently cross-linked (Glycyl lysine isopeptide (Lys-Gly) (interchain with G-Cter in ubiquitin)). The UBR-type zinc finger occupies 97 to 168; it reads HLCGRVFKVG…EGPYCQKHKL (72 aa). Zn(2+) is bound by residues C99, C112, C115, C124, C127, H133, and H136. Position 148 (F148) interacts with a peptide. C149 contacts Zn(2+). Residue D150 coordinates a peptide. C151 contributes to the Zn(2+) binding site. D153 serves as a coordination point for a peptide. A Glycyl lysine isopeptide (Lys-Gly) (interchain with G-Cter in ubiquitin) cross-link involves residue K158. C163 lines the Zn(2+) pocket. K165 participates in a covalent cross-link: Glycyl lysine isopeptide (Lys-Gly) (interchain with G-Cter in ubiquitin). A Zn(2+)-binding site is contributed by H166. Glycyl lysine isopeptide (Lys-Gly) (interchain with G-Cter in ubiquitin) cross-links involve residues K248, K255, and K470. At S476 the chain carries Phosphoserine. Glycyl lysine isopeptide (Lys-Gly) (interchain with G-Cter in ubiquitin) cross-links involve residues K488, K568, K779, and K789. Residues 1012–1033 form a disordered region; that stretch reads AEAEGTIMEESSRDKDKAERKR. Residues 1019-1054 adopt a coiled-coil conformation; the sequence is MEESSRDKDKAERKRKAEIARLRREKIMAQMSEMQR. Positions 1021–1033 are enriched in basic and acidic residues; it reads ESSRDKDKAERKR. Positions 1108, 1111, 1168, 1170, 1173, 1176, 1210, and 1213 each coordinate Zn(2+). An RING-type; atypical zinc finger spans residues 1108 to 1214; it reads CILCQEEQEV…NGEFLCPLCE (107 aa). Residues K1496, K1599, and K1689 each participate in a glycyl lysine isopeptide (Lys-Gly) (interchain with G-Cter in ubiquitin) cross-link. S1694 carries the phosphoserine modification. A Phosphotyrosine modification is found at Y1697.

It belongs to the E3 ubiquitin-protein ligase UBR1-like family. Interacts with UBE2B; promotes the UBE2B-H2A interaction and the ubiquitination of histone H2A by UBE2B and UBR2. Interacts with RECQL4. Interacts with Tex19.1 and Tex19.2; does not lead to Tex19.1 degradation and stabilizes it. Interacts with L1RE1. Interacts with CASP8. Interacts with ATXN3. Interacts with UBE2O. In terms of processing, dephosphorylated by DUSP22 at Ser-1694 and Tyr-1697, leading to subsequent ubiquitination and proteasomal degradation. 'Lys-48'-linked ubiquitinated at Lys-94, Lys-779 and Lys-1599 following DUSP22-mediated dephosphorylation of Ser-1694 and Tyr-1697 which promotes UBR2 interaction with the SCF(FBW1A) E3 ubiquitin-protein ligase complex. Highly expressed in skeletal muscle. Also expressed in heart, kidney and testis. Expressed in acinar cells of the pancreas. In testes, expressed primarily in spermatocytes. Expressed in cerebellum.

The protein localises to the nucleus. The protein resides in the chromosome. The enzyme catalyses S-ubiquitinyl-[E2 ubiquitin-conjugating enzyme]-L-cysteine + [acceptor protein]-L-lysine = [E2 ubiquitin-conjugating enzyme]-L-cysteine + N(6)-ubiquitinyl-[acceptor protein]-L-lysine.. Its pathway is protein modification; protein ubiquitination. In terms of biological role, E3 ubiquitin-protein ligase which is a component of the N-end rule pathway. Recognizes and binds to proteins bearing specific N-terminal residues (N-degrons) that are destabilizing according to the N-end rule, leading to their ubiquitination and subsequent degradation. Recognizes both type-1 and type-2 N-degrons, containing positively charged amino acids (Arg, Lys and His) and bulky and hydrophobic amino acids, respectively. Does not ubiquitinate proteins that are acetylated at the N-terminus. In contrast, it strongly binds methylated N-degrons. Plays a critical role in chromatin inactivation and chromosome-wide transcriptional silencing during meiosis via ubiquitination of histone H2A. Binds leucine and is a negative regulator of the leucine-mTOR signaling pathway, thereby controlling cell growth. Required for spermatogenesis, promotes, with Tex19.1, SPO11-dependent recombination foci to accumulate and drive robust homologous chromosome synapsis. Polyubiquitinates LINE-1 retrotransposon encoded, LIRE1, which induces degradation, inhibiting LINE-1 retrotransposon mobilization. Catalyzes ubiquitination and degradation of the N-terminal part of NLRP1B following NLRP1B activation by pathogens and other damage-associated signals: ubiquitination promotes degradation of the N-terminal part and subsequent release of the cleaved C-terminal part of NLRP1B, which polymerizes and forms the NLRP1B inflammasome followed by host cell pyroptosis. Plays a role in T-cell receptor signaling by inducing 'Lys-63'-linked ubiquitination of lymphocyte cell-specific kinase LCK. This activity is regulated by DUSP22, which induces 'Lys-48'-linked ubiquitination of UBR2, leading to its proteasomal degradation by SCF E3 ubiquitin-protein ligase complex. The sequence is that of E3 ubiquitin-protein ligase UBR2 from Mus musculus (Mouse).